Reading from the N-terminus, the 622-residue chain is Palmitoyltransferase ZDHHC13 (622 aa).

Met1 is subject to N-acetylmethionine. Over 1–291 (MEGPGLGSQC…RLWRWLHKCE (291 aa)) the chain is Cytoplasmic. ANK repeat units lie at residues 43–78 (PLIE…VRQP), 81–110 (ENVS…VIDQ), 115–144 (LNST…DPTL), 148–177 (EGFS…SVNM), 181–211 (NGQT…SLSV), 216–245 (HQNT…SLDI), and 249–277 (KGET…KMRA). A helical transmembrane segment spans residues 292-312 (LFLLLILSMITLWAVGYILDF). Residues 313–320 (NSDSWLLK) are Lumenal-facing. A helical membrane pass occupies residues 321–341 (GCLLVALFFLTSLFPRFLVGY). The Cytoplasmic segment spans residues 342–347 (KNLVYL). The helical transmembrane segment at 348–368 (PTVFLLSSIFWIFMTWFILFF) threads the bilayer. Over 369 to 371 (PDT) the chain is Lumenal. The chain crosses the membrane as a helical span at residues 372-392 (AGSPLYFAFIFSIMAFLYFFY). Topologically, residues 393–470 (KTWATDPGFT…RCIGFGNHHH (78 aa)) are cytoplasmic. One can recognise a DHHC domain in the interval 426 to 476 (TFCTSCLIRKPLRSLHCHVCNSCVARFDQHCFWTGRCIGFGNHHHYIFFLL). Cys456 serves as the catalytic S-palmitoyl cysteine intermediate. The helical transmembrane segment at 471 to 491 (YIFFLLSLSMVCDWIIYGSFV) threads the bilayer. Over 492-518 (YWSNHCATTFKEDGLWTYLNQIVACSP) the chain is Lumenal. A helical membrane pass occupies residues 519-539 (WVLYIFMLAAFHFSWSTFLLI). Residues 540–622 (NQLFQIAFLG…PAKEKVLRSV (83 aa)) lie on the Cytoplasmic side of the membrane.

The protein belongs to the DHHC palmitoyltransferase family. AKR/ZDHHC17 subfamily. In terms of assembly, interacts (via ANK repeats) with CLIP3. Interacts (via ANK repeats) with DNAJC5 (via C-terminus). Interacts (via ANK repeats) with HTT. Interacts (via ANK repeats) with MAP6. Interacts (via ANK repeats) with SNAP23. Interacts (via ANK repeats) with SNAP25. May interact (via ANK repeats) with SPRED2. Expressed in most adult tissues, but at low levels in the liver, skin, and lung.

It localises to the golgi apparatus membrane. The protein resides in the cytoplasmic vesicle membrane. It catalyses the reaction L-cysteinyl-[protein] + hexadecanoyl-CoA = S-hexadecanoyl-L-cysteinyl-[protein] + CoA. Its function is as follows. Palmitoyltransferase that could catalyze the addition of palmitate onto various protein substrates. Palmitoyltransferase for HTT and GAD2. May play a role in Mg(2+) transport. The polypeptide is Palmitoyltransferase ZDHHC13 (Mus musculus (Mouse)).